The following is a 236-amino-acid chain: MNTTPDMPTPRALRELTPLEARILGVLVEKQHTVPDTYPLSLNALTAGCNQKTARSPVMNVSEDEVTTAIDSLKHLSLVMEGSSSRVPRFEHNMNRVLGIPSQAIALLTILLLRGPQTAAELRLNSARLHGFADISSVEAFLDELAARAQPLVIRLPRAAGARENRWLHLMCGEVNVADFVGPDTGGGTDSVPPSEFEALKAEQKRLADEVARLNALVQRMATELGIDVDAPGDAG.

Belongs to the UPF0502 family.

The polypeptide is UPF0502 protein Bamb_4889 (Burkholderia ambifaria (strain ATCC BAA-244 / DSM 16087 / CCUG 44356 / LMG 19182 / AMMD) (Burkholderia cepacia (strain AMMD))).